A 155-amino-acid chain; its full sequence is Ribosomal RNA large subunit methyltransferase H (155 aa).

S-adenosyl-L-methionine-binding positions include glycine 104 and leucine 123–phenylalanine 128.

Belongs to the RNA methyltransferase RlmH family. As to quaternary structure, homodimer.

It localises to the cytoplasm. The enzyme catalyses pseudouridine(1915) in 23S rRNA + S-adenosyl-L-methionine = N(3)-methylpseudouridine(1915) in 23S rRNA + S-adenosyl-L-homocysteine + H(+). Functionally, specifically methylates the pseudouridine at position 1915 (m3Psi1915) in 23S rRNA. This Nitratidesulfovibrio vulgaris (strain DSM 19637 / Miyazaki F) (Desulfovibrio vulgaris) protein is Ribosomal RNA large subunit methyltransferase H.